The chain runs to 698 residues: Cytochrome c oxidase subunit 1 (698 aa).

A helical membrane pass occupies residues 65 to 85 (INYLYFSMVTGLSGAALATMI). Glu-88 contacts Ca(2+). His-111 lines the Fe(II)-heme a pocket. A run of 8 helical transmembrane segments spans residues 113-133 (LIMV…NFLI), 147-167 (LNSI…KIGF), 304-324 (ILIL…TNLL), 349-369 (IFLT…AVIM), 395-415 (LFWF…FGFI), 434-454 (IWAI…HMYL), 468-488 (ITIM…LSLV), and 498-518 (FLFS…GMWL). His-401 is a binding site for Cu cation. The segment at residues 401-405 (HPEVY) is a cross-link (1'-histidyl-3'-tyrosine (His-Tyr)). Tyr-405 contacts O2. Cu cation is bound by residues His-450 and His-451. 2 residues coordinate Mg(2+): His-528 and Asp-529. The next 3 membrane-spanning stretches (helical) occupy residues 533 to 553 (VVAH…FSGF), 574 to 594 (LIYY…LGFS), and 613 to 633 (MSTA…LMIF). Residue His-536 participates in heme a3 binding. His-538 is a binding site for Fe(II)-heme a.

The protein belongs to the heme-copper respiratory oxidase family. Component of the cytochrome c oxidase (complex IV, CIV), a multisubunit enzyme composed of a catalytic core of 3 subunits and several supernumerary subunits. The complex exists as a monomer or a dimer and forms supercomplexes (SCs) in the inner mitochondrial membrane with ubiquinol-cytochrome c oxidoreductase (cytochrome b-c1 complex, complex III, CIII). It depends on heme as a cofactor. Requires Cu cation as cofactor.

It is found in the mitochondrion inner membrane. The enzyme catalyses 4 Fe(II)-[cytochrome c] + O2 + 8 H(+)(in) = 4 Fe(III)-[cytochrome c] + 2 H2O + 4 H(+)(out). It functions in the pathway energy metabolism; oxidative phosphorylation. Functionally, component of the cytochrome c oxidase, the last enzyme in the mitochondrial electron transport chain which drives oxidative phosphorylation. The respiratory chain contains 3 multisubunit complexes succinate dehydrogenase (complex II, CII), ubiquinol-cytochrome c oxidoreductase (cytochrome b-c1 complex, complex III, CIII) and cytochrome c oxidase (complex IV, CIV), that cooperate to transfer electrons derived from NADH and succinate to molecular oxygen, creating an electrochemical gradient over the inner membrane that drives transmembrane transport and the ATP synthase. Cytochrome c oxidase is the component of the respiratory chain that catalyzes the reduction of oxygen to water. Electrons originating from reduced cytochrome c in the intermembrane space (IMS) are transferred via the dinuclear copper A center (CU(A)) of subunit 2 and heme A of subunit 1 to the active site in subunit 1, a binuclear center (BNC) formed by heme A3 and copper B (CU(B)). The BNC reduces molecular oxygen to 2 water molecules using 4 electrons from cytochrome c in the IMS and 4 protons from the mitochondrial matrix. This chain is Cytochrome c oxidase subunit 1 (COI), found in Tetrahymena pyriformis.